Consider the following 610-residue polypeptide: Granule-bound starch synthase 1, chloroplastic/amyloplastic (610 aa).

The transit peptide at 1 to 79 (MATVTASSNF…SKVKTAGKIV (79 aa)) directs the protein to the chloroplast. Lysine 98 serves as a coordination point for ADP-alpha-D-glucose. Residues 438–454 (TGKKKMEAQILELEEKF) are a coiled coil.

Belongs to the glycosyltransferase 1 family. Bacterial/plant glycogen synthase subfamily. In terms of assembly, interacts with PTST. This interaction is critical for the localization to starch granules. Expressed in roots, inflorescences, flowers, fruits and at much higher levels in leaves.

The protein resides in the plastid. It localises to the chloroplast. The enzyme catalyses an NDP-alpha-D-glucose + [(1-&gt;4)-alpha-D-glucosyl](n) = [(1-&gt;4)-alpha-D-glucosyl](n+1) + a ribonucleoside 5'-diphosphate + H(+). It functions in the pathway glycan biosynthesis; starch biosynthesis. Functionally, required for the synthesis of amylose. Destroyed as it is released from the starch granules during the night. The circadian expression is controlled by CCA1 and LHY transcription factors. This is Granule-bound starch synthase 1, chloroplastic/amyloplastic from Arabidopsis thaliana (Mouse-ear cress).